The primary structure comprises 529 residues: Cytochrome P450 monooxygenase 136 (529 aa).

A helical membrane pass occupies residues 9-29 (SPLALAVLSIATCQLALVWWY). Residue Cys-447 coordinates heme.

The protein belongs to the cytochrome P450 family. The cofactor is heme.

The protein localises to the membrane. It functions in the pathway secondary metabolite biosynthesis. In terms of biological role, cytochrome P450 monooxygenase that is able to use delta(6)-protoilludene as a substrate to produce delta(6)-protoilludene-5-ol. The protein is Cytochrome P450 monooxygenase 136 of Postia placenta (strain ATCC 44394 / Madison 698-R) (Brown rot fungus).